The following is a 369-amino-acid chain: DNA replication and repair protein RecF (369 aa).

30–37 (GPNGSGKT) contacts ATP.

Belongs to the RecF family.

The protein resides in the cytoplasm. Its function is as follows. The RecF protein is involved in DNA metabolism; it is required for DNA replication and normal SOS inducibility. RecF binds preferentially to single-stranded, linear DNA. It also seems to bind ATP. The chain is DNA replication and repair protein RecF from Chlorobium luteolum (strain DSM 273 / BCRC 81028 / 2530) (Pelodictyon luteolum).